A 351-amino-acid polypeptide reads, in one-letter code: Sulfate/thiosulfate import ATP-binding protein CysA (351 aa).

The 235-residue stretch at 3–237 folds into the ABC transporter domain; it reads ITVRNLHKRF…PRSAFVYEFL (235 aa). 35–42 is an ATP binding site; the sequence is GPSGCGKT.

The protein belongs to the ABC transporter superfamily. Sulfate/tungstate importer (TC 3.A.1.6) family. As to quaternary structure, the complex is composed of two ATP-binding proteins (CysA), two transmembrane proteins (CysT and CysW) and a solute-binding protein (CysP).

It localises to the cell inner membrane. The enzyme catalyses sulfate(out) + ATP + H2O = sulfate(in) + ADP + phosphate + H(+). It carries out the reaction thiosulfate(out) + ATP + H2O = thiosulfate(in) + ADP + phosphate + H(+). Functionally, part of the ABC transporter complex CysAWTP involved in sulfate/thiosulfate import. Responsible for energy coupling to the transport system. This Burkholderia pseudomallei (strain K96243) protein is Sulfate/thiosulfate import ATP-binding protein CysA.